We begin with the raw amino-acid sequence, 302 residues long: Eukaryotic translation initiation factor 3 subunit F (302 aa).

One can recognise an MPN domain in the interval 23–165 (IVIEPAVLFS…IKTYVSSPVG (143 aa)). Position 162 is a phosphoserine (serine 162).

The protein belongs to the eIF-3 subunit F family. As to quaternary structure, component of the eukaryotic translation initiation factor 3 (eIF-3) complex. The eIF-3 complex appears to include tif32/eif3a, SPAC25G10.08/eif3b, tif33/eif3c, SPBC4C3.07/eif3f, tif35/eif3g and sum1/eif3i. This set of common subunits may also associate exclusively with either moe1/eif3d and int6/eif3e, or with SPAC821.05/eif3h and SPAC1751.03/eif3m. The eIF-3 complex may also include SPAC3A12.13c/eif3j.

It localises to the cytoplasm. In terms of biological role, component of the eukaryotic translation initiation factor 3 (eIF-3) complex, which is involved in protein synthesis of a specialized repertoire of mRNAs and, together with other initiation factors, stimulates binding of mRNA and methionyl-tRNAi to the 40S ribosome. The eIF-3 complex specifically targets and initiates translation of a subset of mRNAs involved in cell proliferation. The protein is Eukaryotic translation initiation factor 3 subunit F of Schizosaccharomyces pombe (strain 972 / ATCC 24843) (Fission yeast).